The primary structure comprises 239 residues: Leucine-rich repeat-containing protein 57 (239 aa).

Gly-2 carries the N-myristoyl glycine lipid modification. LRR repeat units lie at residues 39–60, 63–85, 86–107, 109–130, 132–153, 154–175, 177–197, and 202–222; these read NLRT…IIGK, LLKS…CNLK, KLET…FGQL, ALKT…LCCL, HLDV…VGEL, QAIE…ISCC, RLKV…PQSI, and QICL…RELE.

It localises to the membrane. The polypeptide is Leucine-rich repeat-containing protein 57 (Lrrc57) (Mus musculus (Mouse)).